Here is a 487-residue protein sequence, read N- to C-terminus: MTELFIDGAWRDGAGPVFASRNPGTGEPVWEGAGASADDVERAVASARRAFAAWSALDLDARCAIVKRFAALLVERKEALATMIGRETGKPLWEARTEVASMAAKVDVSIAAYHERTGERRSPTADGVAVLRHRPHGVVAVFGPYNFPGHLPNGHIVPALIAGNTVVFKPSELAPGVARATVEIWRDAGLPAGVLNLVQGEKDTGVALANHRQIDGLFFTGSSDTGTLLHRQFGGRPEIVLALEMGGNNPLVVADVEDIDAAVHHAIQSAFLSAGQRCTCARRILVPRGAFGDRFLERFADVASRITADVYDADPQPFMGAVISARAASRLVAAQAKLLELGAAPIIEMRQRDPALGFVNASILDVTPVRELPDEEHFGPLAQIVRYTDLDDAIARANDTAFGLSAGLLADDETVWNTFRRTIRAGIVNWNRPTNGASSAAPFGGAGRSGNHRPSAYYAADYCAYPMASVESAQLQMPANLSPGLHF.

221 to 226 (GSSDTG) lines the NAD(+) pocket. Catalysis depends on residues Glu-244 and Cys-278.

This sequence belongs to the aldehyde dehydrogenase family. AstD subfamily.

The catalysed reaction is N-succinyl-L-glutamate 5-semialdehyde + NAD(+) + H2O = N-succinyl-L-glutamate + NADH + 2 H(+). The protein operates within amino-acid degradation; L-arginine degradation via AST pathway; L-glutamate and succinate from L-arginine: step 4/5. Functionally, catalyzes the NAD-dependent reduction of succinylglutamate semialdehyde into succinylglutamate. In Burkholderia mallei (strain ATCC 23344), this protein is N-succinylglutamate 5-semialdehyde dehydrogenase.